The primary structure comprises 857 residues: MLRLGALRLRGLALRSSQGRPSSAGLREGQESPPSPPEWKDRAETVIIGGGCVGVSLAYHLAKAGMRDVVLLEKSELTAGSTWHAAGLTTYFHPGINLKKIHYDSIKLYERLEEETGQVVGFHQPGSIRLATTPERVDEFKYQMTRTNWHATEQYIIEPEKIHELFPLLNMDKILAGLYNPGDGHIDPYSLTMALATGARKYGVLLKYPAPVTSLKPRPDGTWDVETPQGSVRANRIVNAAGFWAREVGKMIGLDHPLIPVQHQYVVTSTIPEVKALKRELPVLRDLEGSYYLRQERDGLLFGPYESQEKMKLQASWVAHGVPPGFGKELFESDLDRITEHVEAAMEMVPVLKKADIINIVNGPITYSPDILPMVGPHQGVRNYWVAIGFGYGIIHAGGVGKYLSDWILHGEPPFDLIELDPNRYGKWTTTQYTEAKARESYGFNNIVGYPKEERFAGRPTQRVSGLYKILESKCSMGFHAGWEQPHWFYKPGQDTQYRPSFRRTNWFRPVGSEYKQVMQRVGVIDLSPFGKFNIKGQDSTQLLDHLCANVIPKVGFTNISHMLTPRGRVYAELTVSHQSPGEFLLITGSGSELHDLRWIEEAAVRGGYDVEIRNITDELGVLGVAGPYARRVLQKLTSEDLSDDVFKFLQTKSLKISDIPVTAIRISYTGELGWELYHRREDSAALYERIMNAGQEEGIDNFGTYALNALRLEKAFRAWGSEMNCDTNPLEAGLDYFIKLNKPADFTGKQALKQIKAKGLKRRLVCLTLATDDVDPEGNESVWYKGKVIGNTTSGSYSYSIQKSLAFAYVPVELSEVGQQVEVELLGKNYPATIIQEPLVLTEPTRTRLQKDGRKS.

The N-terminal 43 residues, 1–43 (MLRLGALRLRGLALRSSQGRPSSAGLREGQESPPSPPEWKDRA), are a transit peptide targeting the mitochondrion. Residues 15-39 (RSSQGRPSSAGLREGQESPPSPPEW) form a disordered region. FAD-binding positions include 52 to 53 (CV), 73 to 74 (EK), and 80 to 88 (GSTWHAAGL). Histidine 84 carries the tele-8alpha-FAD histidine modification. At lysine 107 the chain carries N6-acetyllysine. An N6-acetyllysine; alternate modification is found at lysine 141. Lysine 141 carries the post-translational modification N6-succinyllysine; alternate. Position 161 is an N6-acetyllysine (lysine 161). An FAD-binding site is contributed by valine 212. An N6-acetyllysine modification is found at lysine 216. Tryptophan 244 serves as a coordination point for FAD. An N6-succinyllysine mark is found at lysine 310 and lysine 312. Lysine 328 and lysine 353 each carry N6-acetyllysine. An FAD-binding site is contributed by 390 to 395 (FGYGII). Lysine 427, lysine 469, and lysine 516 each carry N6-acetyllysine; alternate. Residues lysine 427, lysine 469, and lysine 516 each carry the N6-succinyllysine; alternate modification. 573 to 575 (ELT) contributes to the (6S)-5,6,7,8-tetrahydrofolate binding site. Lysine 648 is modified (N6-acetyllysine; alternate). Lysine 648 is subject to N6-succinyllysine; alternate. (6S)-5,6,7,8-tetrahydrofolate contacts are provided by residues tyrosine 669, 676-678 (ELY), and tyrosine 737. Position 757 is an N6-acetyllysine (lysine 757). N6-acetyllysine; alternate is present on lysine 786. An N6-succinyllysine; alternate modification is found at lysine 786. N6-succinyllysine is present on lysine 788.

The protein belongs to the GcvT family. The cofactor is FAD.

Its subcellular location is the mitochondrion. It catalyses the reaction (6S)-5,6,7,8-tetrahydrofolyl-(gamma-L-Glu)(n) + N,N-dimethylglycine + oxidized [electron-transfer flavoprotein] + H(+) = (6R)-5,10-methylenetetrahydrofolyl-(gamma-L-Glu)(n) + sarcosine + reduced [electron-transfer flavoprotein]. Its pathway is amine and polyamine degradation; betaine degradation; sarcosine from betaine: step 2/2. Functionally, catalyzes the demethylation of N,N-dimethylglycine to sarcosine. Also has activity with sarcosine in vitro. The protein is Dimethylglycine dehydrogenase, mitochondrial (Dmgdh) of Rattus norvegicus (Rat).